Reading from the N-terminus, the 1186-residue chain is ATP-dependent helicase/deoxyribonuclease subunit B (1186 aa).

The 308-residue stretch at 1-308 (MSVKFLLGRA…AHLEKEWGKN (308 aa)) folds into the UvrD-like helicase ATP-binding domain. 8 to 15 (GRAGSGKT) lines the ATP pocket. Residues 288–620 (SLPRFKDNPA…LVGTADRSRY (333 aa)) enclose the UvrD-like helicase C-terminal domain. [4Fe-4S] cluster-binding residues include C822, C1144, C1147, and C1153.

The protein belongs to the helicase family. AddB/RexB type 1 subfamily. In terms of assembly, heterodimer of AddA and AddB. Mg(2+) serves as cofactor. It depends on [4Fe-4S] cluster as a cofactor.

In terms of biological role, the heterodimer acts as both an ATP-dependent DNA helicase and an ATP-dependent, dual-direction single-stranded exonuclease. Recognizes the chi site generating a DNA molecule suitable for the initiation of homologous recombination. The AddB subunit has 5' -&gt; 3' nuclease activity but not helicase activity. The protein is ATP-dependent helicase/deoxyribonuclease subunit B of Natranaerobius thermophilus (strain ATCC BAA-1301 / DSM 18059 / JW/NM-WN-LF).